The sequence spans 289 residues: Testis-expressed protein 26 (289 aa).

Residues 1–26 are disordered; sequence MEQPGPRAPDPSLCHHNLQPTDDPNW. Mn regions lie at residues 30-42, 69-83, 144-157, 179-193, and 233-247; these read ATTM…PKTG, QTQY…SHSK, ISLT…RSKA, DTEF…AKIP, and QTTY…YPDF.

The chain is Testis-expressed protein 26 (TEX26) from Homo sapiens (Human).